We begin with the raw amino-acid sequence, 651 residues long: UvrABC system protein B (651 aa).

Residues 25–411 (RGISCGAKEQ…TGGVATEQLI (387 aa)) enclose the Helicase ATP-binding domain. ATP is bound at residue 38–45 (GVTGSGKT). Residues 91–114 (YYDYYQPEAYIPQSDVYIEKDALI) carry the Beta-hairpin motif. A Helicase C-terminal domain is found at 427-591 (DGQIHDVMCE…IVPRTIQKPV (165 aa)). Residues 593–615 (TSLSERVGSSRKKVSRDTNTDPA) form a disordered region. The 36-residue stretch at 616–651 (NRDIVELQKEMLLCAENLDFERAVEIRNEIKRLTAP) folds into the UVR domain.

It belongs to the UvrB family. Forms a heterotetramer with UvrA during the search for lesions. Interacts with UvrC in an incision complex.

Its subcellular location is the cytoplasm. Its function is as follows. The UvrABC repair system catalyzes the recognition and processing of DNA lesions. A damage recognition complex composed of 2 UvrA and 2 UvrB subunits scans DNA for abnormalities. Upon binding of the UvrA(2)B(2) complex to a putative damaged site, the DNA wraps around one UvrB monomer. DNA wrap is dependent on ATP binding by UvrB and probably causes local melting of the DNA helix, facilitating insertion of UvrB beta-hairpin between the DNA strands. Then UvrB probes one DNA strand for the presence of a lesion. If a lesion is found the UvrA subunits dissociate and the UvrB-DNA preincision complex is formed. This complex is subsequently bound by UvrC and the second UvrB is released. If no lesion is found, the DNA wraps around the other UvrB subunit that will check the other stand for damage. In Anaplasma marginale (strain St. Maries), this protein is UvrABC system protein B.